A 329-amino-acid polypeptide reads, in one-letter code: Ketol-acid reductoisomerase (NADP(+)) (329 aa).

In terms of domain architecture, KARI N-terminal Rossmann spans Met1–Thr181. NADP(+) is bound by residues Tyr24–Gln27, Arg47, and Asp82–Gln85. His107 is a catalytic residue. Gly133 contacts NADP(+). The 146-residue stretch at Thr182 to Leu327 folds into the KARI C-terminal knotted domain. Asp190, Glu194, Glu226, and Glu230 together coordinate Mg(2+). Residue Ser251 coordinates substrate.

It belongs to the ketol-acid reductoisomerase family. Mg(2+) serves as cofactor.

The catalysed reaction is (2R)-2,3-dihydroxy-3-methylbutanoate + NADP(+) = (2S)-2-acetolactate + NADPH + H(+). It carries out the reaction (2R,3R)-2,3-dihydroxy-3-methylpentanoate + NADP(+) = (S)-2-ethyl-2-hydroxy-3-oxobutanoate + NADPH + H(+). The protein operates within amino-acid biosynthesis; L-isoleucine biosynthesis; L-isoleucine from 2-oxobutanoate: step 2/4. It functions in the pathway amino-acid biosynthesis; L-valine biosynthesis; L-valine from pyruvate: step 2/4. In terms of biological role, involved in the biosynthesis of branched-chain amino acids (BCAA). Catalyzes an alkyl-migration followed by a ketol-acid reduction of (S)-2-acetolactate (S2AL) to yield (R)-2,3-dihydroxy-isovalerate. In the isomerase reaction, S2AL is rearranged via a Mg-dependent methyl migration to produce 3-hydroxy-3-methyl-2-ketobutyrate (HMKB). In the reductase reaction, this 2-ketoacid undergoes a metal-dependent reduction by NADPH to yield (R)-2,3-dihydroxy-isovalerate. The protein is Ketol-acid reductoisomerase (NADP(+)) of Maridesulfovibrio salexigens (strain ATCC 14822 / DSM 2638 / NCIMB 8403 / VKM B-1763) (Desulfovibrio salexigens).